The chain runs to 173 residues: Calcineurin subunit B (173 aa).

4 EF-hand domains span residues 20 to 55, 59 to 87, 89 to 124, and 130 to 165; these read DEID…AANP, RLMD…FSTK, NKKE…MVGN, and QLQQ…TNVY. Ca(2+)-binding residues include Asp-33, Asp-35, Ser-37, Glu-44, Asp-65, Asn-67, Ser-69, Asp-71, Glu-76, Asp-102, Asp-104, Asp-106, Tyr-108, Glu-113, Asp-143, Asp-145, Asp-147, Lys-149, and Glu-154.

The protein belongs to the calcineurin regulatory subunit family. Composed of a catalytic subunit (A) and a regulatory subunit (B).

In terms of biological role, regulatory subunit of calcineurin, a calcium-dependent, calmodulin stimulated protein phosphatase. Confers calcium sensitivity. This chain is Calcineurin subunit B (CNB1), found in Yarrowia lipolytica (strain CLIB 122 / E 150) (Yeast).